Here is a 274-residue protein sequence, read N- to C-terminus: Nitrogenase iron protein (274 aa).

An ATP-binding site is contributed by 8–15 (GKGGIGKS). A [4Fe-4S] cluster-binding site is contributed by C94. An ADP-ribosylarginine; by dinitrogenase reductase ADP-ribosyltransferase modification is found at R97. Residue C131 coordinates [4Fe-4S] cluster.

Belongs to the NifH/BchL/ChlL family. As to quaternary structure, homodimer. It depends on [4Fe-4S] cluster as a cofactor. The reversible ADP-ribosylation of Arg-97 inactivates the nitrogenase reductase and regulates nitrogenase activity.

The enzyme catalyses N2 + 8 reduced [2Fe-2S]-[ferredoxin] + 16 ATP + 16 H2O = H2 + 8 oxidized [2Fe-2S]-[ferredoxin] + 2 NH4(+) + 16 ADP + 16 phosphate + 6 H(+). Functionally, the key enzymatic reactions in nitrogen fixation are catalyzed by the nitrogenase complex, which has 2 components: the iron protein and the molybdenum-iron protein. In Chlorobium phaeobacteroides (strain BS1), this protein is Nitrogenase iron protein.